Reading from the N-terminus, the 136-residue chain is Class I hydrophobin 16 (136 aa).

A signal peptide spans 1 to 19 (MKFTSVIALVATAATLVGA). Intrachain disulfides connect C58/C115, C65/C109, C66/C99, and C116/C129. N74 carries an N-linked (GlcNAc...) asparagine glycan.

It belongs to the fungal hydrophobin family. As to quaternary structure, self-assembles to form functional amyloid fibrils called rodlets. Self-assembly into fibrillar rodlets occurs spontaneously at hydrophobic:hydrophilic interfaces and the rodlets further associate laterally to form amphipathic monolayers.

Its subcellular location is the secreted. It localises to the cell wall. Functionally, aerial growth, conidiation, and dispersal of filamentous fungi in the environment rely upon a capability of their secreting small amphipathic proteins called hydrophobins (HPBs) with low sequence identity. Class I can self-assemble into an outermost layer of rodlet bundles on aerial cell surfaces, conferring cellular hydrophobicity that supports fungal growth, development and dispersal; whereas Class II form highly ordered films at water-air interfaces through intermolecular interactions but contribute nothing to the rodlet structure. Hydph16 is a class I hydrophobin that has specific functions in aerial mycelium formation, cell wall stress protection, and cell wall structure formation, but does not seem to be involved in mycelial hydrophobicity. Specifically functions in resisting cell wall synthesis inhibitors. This chain is Class I hydrophobin 16, found in Pleurotus ostreatus (strain PC15) (Oyster mushroom).